The chain runs to 282 residues: Energy-coupling factor transporter ATP-binding protein EcfA1 (282 aa).

Residues 6-243 (ISFDHVTFTY…VEMLKRIGLD (238 aa)) enclose the ABC transporter domain. 40–47 (GHNGSGKS) is an ATP binding site.

It belongs to the ABC transporter superfamily. Energy-coupling factor EcfA family. Forms a stable energy-coupling factor (ECF) transporter complex composed of 2 membrane-embedded substrate-binding proteins (S component), 2 ATP-binding proteins (A component) and 2 transmembrane proteins (T component).

It localises to the cell membrane. In terms of biological role, ATP-binding (A) component of a common energy-coupling factor (ECF) ABC-transporter complex. Unlike classic ABC transporters this ECF transporter provides the energy necessary to transport a number of different substrates. The polypeptide is Energy-coupling factor transporter ATP-binding protein EcfA1 (Lactobacillus delbrueckii subsp. bulgaricus (strain ATCC 11842 / DSM 20081 / BCRC 10696 / JCM 1002 / NBRC 13953 / NCIMB 11778 / NCTC 12712 / WDCM 00102 / Lb 14)).